Consider the following 306-residue polypeptide: Protein FdhE homolog (306 aa).

It belongs to the FdhE family.

The protein localises to the cytoplasm. Functionally, necessary for formate dehydrogenase activity. This chain is Protein FdhE homolog, found in Rhizobium meliloti (strain 1021) (Ensifer meliloti).